Here is a 254-residue protein sequence, read N- to C-terminus: 5'-nucleotidase SurE (254 aa).

The a divalent metal cation site is built by Asp-8, Asp-9, Ser-39, and Asn-91.

This sequence belongs to the SurE nucleotidase family. A divalent metal cation is required as a cofactor.

It is found in the cytoplasm. The catalysed reaction is a ribonucleoside 5'-phosphate + H2O = a ribonucleoside + phosphate. Its function is as follows. Nucleotidase that shows phosphatase activity on nucleoside 5'-monophosphates. This is 5'-nucleotidase SurE from Methylibium petroleiphilum (strain ATCC BAA-1232 / LMG 22953 / PM1).